Reading from the N-terminus, the 171-residue chain is MEIILIKPVRKLGKIGDILKVADGFGRNYLLPQKLAIRATEPNKELIVKQKHEFEAKDKQIREEVEKINALIKDQQLVFIRQTSNDGKLFGSVTNKEIANKLSENISYNISHSNVILDKQIKSTGIYTVEIRLHAELNAIVTVIVARSESEAQDYLREQKTETSEDLAESA.

Belongs to the bacterial ribosomal protein bL9 family.

In terms of biological role, binds to the 23S rRNA. This is Large ribosomal subunit protein bL9 from Rickettsia rickettsii (strain Iowa).